The sequence spans 249 residues: Pyridoxine 5'-phosphate synthase (249 aa).

N7 contacts 3-amino-2-oxopropyl phosphate. Residue 9-10 (DH) participates in 1-deoxy-D-xylulose 5-phosphate binding. R18 serves as a coordination point for 3-amino-2-oxopropyl phosphate. H43 serves as the catalytic Proton acceptor. R45 and H50 together coordinate 1-deoxy-D-xylulose 5-phosphate. The Proton acceptor role is filled by E70. Residue T100 participates in 1-deoxy-D-xylulose 5-phosphate binding. Catalysis depends on H190, which acts as the Proton donor. 3-amino-2-oxopropyl phosphate contacts are provided by residues G191 and 212 to 213 (GH).

This sequence belongs to the PNP synthase family. In terms of assembly, homooctamer; tetramer of dimers.

It is found in the cytoplasm. The enzyme catalyses 3-amino-2-oxopropyl phosphate + 1-deoxy-D-xylulose 5-phosphate = pyridoxine 5'-phosphate + phosphate + 2 H2O + H(+). It participates in cofactor biosynthesis; pyridoxine 5'-phosphate biosynthesis; pyridoxine 5'-phosphate from D-erythrose 4-phosphate: step 5/5. Its function is as follows. Catalyzes the complicated ring closure reaction between the two acyclic compounds 1-deoxy-D-xylulose-5-phosphate (DXP) and 3-amino-2-oxopropyl phosphate (1-amino-acetone-3-phosphate or AAP) to form pyridoxine 5'-phosphate (PNP) and inorganic phosphate. The chain is Pyridoxine 5'-phosphate synthase from Synechococcus sp. (strain CC9902).